Reading from the N-terminus, the 242-residue chain is Adenylate kinase 1 (242 aa).

Residues 38–43 (GSGKGT) and Gly42 each bind ATP. An NMP region spans residues 58–87 (STGDLLREAAEKKTELGLKIKNIINEGKLV). AMP is bound by residues Thr59, Arg64, 85-87 (KLV), Gly113, 113-116 (GYPR), and Gln120. The segment at 154–191 (GRLIHKPSGRIYHKIFNPPKVPFRDDVTNEPLIQREDD) is LID. 2 residues coordinate ATP: Arg155 and Tyr165. Residue Arg199 participates in AMP binding. An ATP-binding site is contributed by Ala229.

It belongs to the adenylate kinase family.

Its subcellular location is the cytoplasm. It catalyses the reaction AMP + ATP = 2 ADP. Its activity is regulated as follows. Inhibited by the dinucleoside pentaphosphate compound P1,P5-di(adenosine-5') pentaphosphate (AP5A). In terms of biological role, catalyzes the reversible transfer of the terminal phosphate group between ATP and AMP. Has very low activity with CTP, GTP, ITP and UTP and no activity with GMP, CMP, UMP or IMP in vitro. This chain is Adenylate kinase 1, found in Plasmodium falciparum (isolate 3D7).